The chain runs to 61 residues: UPF0391 membrane protein Aave_0978 (61 aa).

2 helical membrane passes run 5-25 (AIIFAIISLIAGALGFSGVAA) and 33-53 (ILFFLFLVVAVIFIVLAVLGV).

It belongs to the UPF0391 family.

The protein localises to the cell membrane. In Paracidovorax citrulli (strain AAC00-1) (Acidovorax citrulli), this protein is UPF0391 membrane protein Aave_0978.